Reading from the N-terminus, the 158-residue chain is Protein NrdI (158 aa).

This sequence belongs to the NrdI family.

In terms of biological role, probably involved in ribonucleotide reductase function. The sequence is that of Protein NrdI from Rhodococcus jostii (strain RHA1).